The chain runs to 1610 residues: Protein TASOR (1610 aa).

Residues 1-96 are disordered; the sequence is MATAAETEAP…PERPFRRSFQ (96 aa). Ala2 carries the post-translational modification N-acetylalanine. Gly residues predominate over residues 41–51; that stretch reads NGGGDGGGGAG. Residues 52–61 show a composition bias toward low complexity; that stretch reads PEETAAAEAA. Ser339 is modified (phosphoserine). Lys581 is covalently cross-linked (Glycyl lysine isopeptide (Lys-Gly) (interchain with G-Cter in SUMO2)). 3 positions are modified to phosphoserine: Ser628, Ser631, and Ser668. Disordered stretches follow at residues 631-671 and 687-710; these read SDYE…SLDY and KKNV…RKLE. 2 stretches are compositionally biased toward basic and acidic residues: residues 652–671 and 697–710; these read NSRD…SLDY and EDTK…RKLE. Ser793 bears the Phosphoserine mark. Residues Lys816 and Lys825 each participate in a glycyl lysine isopeptide (Lys-Gly) (interchain with G-Cter in SUMO2) cross-link. Ser836 carries the phosphoserine modification. A Glycyl lysine isopeptide (Lys-Gly) (interchain with G-Cter in SUMO2) cross-link involves residue Lys866. Residues 915 to 941 are disordered; it reads TGGNAGSPEDQHGKHGEKQTPDTLKGT. Phosphoserine is present on residues Ser921 and Lys928. The segment covering 923 to 934 has biased composition (basic and acidic residues); the sequence is EDQHGKHGEKQT. At Thr1004 the chain carries Phosphothreonine. A phosphoserine mark is found at Ser1059 and Ser1508.

Belongs to the TASOR family. In terms of assembly, component of the HUSH complex; at least composed of TASOR, PPHLN1 and MPHOSPH8. Interacts with MORC2; the interaction associateS MORC2 with the HUSH complex which recruits MORC2 to heterochromatic loci. Interacts with ZNF638; leading to recruitment of the HUSH complex to unintegrated retroviral DNA. Interacts with INPP5A, EML1, SV1L, GPSM2, ITGB3BP, CNTN1, ETFA, PSMD8, S100A10, MPHOSPH8, TMEM100, ALB, PARPBP, HCFC2, NCBP1 and SETDB1. As to expression, present in skin, brain and testis (at protein level). Ubiquitously expressed at low levels in the majority of the organs, expressed at higher levels in kidneys, spleen, thymus, seminal vesicles, uterus, and ovaries and its expression is almost six times higher in male tissues than in females. Highly expressed in seminiferous tubules with a strong signal in Sertoli cells, spermatogonia, and spermatocytes.

It is found in the nucleus. It localises to the chromosome. Its function is as follows. Component of the HUSH complex, a multiprotein complex that mediates epigenetic repression. The HUSH complex is recruited to genomic loci rich in H3K9me3 and is required to maintain transcriptional silencing by promoting recruitment of SETDB1, a histone methyltransferase that mediates further deposition of H3K9me3, as well as MORC2. Also represses L1 retrotransposons in collaboration with MORC2 and, probably, SETDB1, the silencing is dependent of repressive epigenetic modifications, such as H3K9me3 mark. Silencing events often occur within introns of transcriptionally active genes, and lead to the down-regulation of host gene expression. The HUSH complex is also involved in the silencing of unintegrated retroviral DNA by being recruited by ZNF638: some part of the retroviral DNA formed immediately after infection remains unintegrated in the host genome and is transcriptionally repressed. Plays a crucial role in early embryonic development. Involved in the organization of spindle poles and spindle apparatus assembly during zygotic division. Plays an important role in maintaining epiblast fitness or potency. This Mus musculus (Mouse) protein is Protein TASOR.